A 205-amino-acid chain; its full sequence is Holliday junction branch migration complex subunit RuvA (205 aa).

The domain I stretch occupies residues 1–67; the sequence is MITSIFGKVT…QIIEEAFAFN (67 aa). Residues 68–146 are domain II; sequence TLEEKEWFCR…NNKNIKGVQV (79 aa). The tract at residues 147–150 is flexible linker; the sequence is ADGY. Residues 150–205 form a domain III region; that stretch reads YDELFETLKSLGYKQQEIQDALKMIEVKPDFDISQLVAEVIKLMSFKNNEITNKTA.

Belongs to the RuvA family. In terms of assembly, homotetramer. Forms an RuvA(8)-RuvB(12)-Holliday junction (HJ) complex. HJ DNA is sandwiched between 2 RuvA tetramers; dsDNA enters through RuvA and exits via RuvB. An RuvB hexamer assembles on each DNA strand where it exits the tetramer. Each RuvB hexamer is contacted by two RuvA subunits (via domain III) on 2 adjacent RuvB subunits; this complex drives branch migration. In the full resolvosome a probable DNA-RuvA(4)-RuvB(12)-RuvC(2) complex forms which resolves the HJ.

The protein localises to the cytoplasm. Its function is as follows. The RuvA-RuvB-RuvC complex processes Holliday junction (HJ) DNA during genetic recombination and DNA repair, while the RuvA-RuvB complex plays an important role in the rescue of blocked DNA replication forks via replication fork reversal (RFR). RuvA specifically binds to HJ cruciform DNA, conferring on it an open structure. The RuvB hexamer acts as an ATP-dependent pump, pulling dsDNA into and through the RuvAB complex. HJ branch migration allows RuvC to scan DNA until it finds its consensus sequence, where it cleaves and resolves the cruciform DNA. This chain is Holliday junction branch migration complex subunit RuvA, found in Mycoplasma genitalium (strain ATCC 33530 / DSM 19775 / NCTC 10195 / G37) (Mycoplasmoides genitalium).